A 512-amino-acid chain; its full sequence is Cytochrome P450 monooxygenase gliC (512 aa).

An N-terminal signal peptide occupies residues 1–19 (MAFTLTILVPCMVLALVAA). Residues Asn118, Asn421, and Asn434 are each glycosylated (N-linked (GlcNAc...) asparagine). Cys452 provides a ligand contact to heme.

It belongs to the cytochrome P450 family. It depends on heme as a cofactor.

Its pathway is mycotoxin biosynthesis. Cytochrome P450 monooxygenase; part of the gene cluster that mediates the biosynthesis of gliotoxin, a member of the epipolythiodioxopiperazine (ETP) class of toxins characterized by a disulfide bridged cyclic dipeptide. The first step in gliotoxin biosynthesis is the condensation of serine and phenylalanine to form the cyclo-L-phenylalanyl-L-serine diketopiperazine (DKP) by the NRPS gliP. GliP is also able to produce the DKP cyclo-L-tryptophanyl-L-serine, suggesting that the substrate specificity of the first adenylation (A) domain in gliP is sufficiently relaxed to accommodate both L-Phe and L-Trp. The cytochrome P450 monooxygenase gliC has been shown to catalyze the subsequent hydroxylation of the alpha-carbon of L-Phe in cyclo-L-phenylalanyl-L-serine whereas the second cytochrome P450 enzyme, gliF, is presumably involved in the modification of the DKP side chain. The glutathione S-transferase (GST) gliG then forms a bis-glutathionylated biosynthetic intermediate which is responsible for the sulfurization of gliotoxin. This bis-glutathionylated intermediate is subsequently processed by the gamma-glutamyl cyclotransferase gliK to remove both gamma-glutamyl moieties. Subsequent processing via gliI yields a biosynthetic intermediate, which is N-methylated via the N-methyltransferase gliN, before the gliotoxin oxidoreductase gliT-mediated disulfide bridge closure. GliN-mediated amide methylation confers stability to ETP, damping the spontaneous formation of tri- and tetrasulfides. Intracellular dithiol gliotoxin oxidized by gliT is subsequently effluxed by gliA. Gliotoxin contributes to pathogenesis during invasive aspergillosis. In macrophages and neutrophils, gliotoxin showed inhibition of various different cell functions including cytokine production, antigen presentation, phagocytosis, and production of reactive oxygen species. In Aspergillus fumigatus (strain ATCC MYA-4609 / CBS 101355 / FGSC A1100 / Af293) (Neosartorya fumigata), this protein is Cytochrome P450 monooxygenase gliC.